Here is a 72-residue protein sequence, read N- to C-terminus: Translation initiation factor IF-1 (72 aa).

Positions 1–72 (MAKEDSIEMQ…SKGRIVFRAR (72 aa)) constitute an S1-like domain.

It belongs to the IF-1 family. In terms of assembly, component of the 30S ribosomal translation pre-initiation complex which assembles on the 30S ribosome in the order IF-2 and IF-3, IF-1 and N-formylmethionyl-tRNA(fMet); mRNA recruitment can occur at any time during PIC assembly.

It localises to the cytoplasm. In terms of biological role, one of the essential components for the initiation of protein synthesis. Stabilizes the binding of IF-2 and IF-3 on the 30S subunit to which N-formylmethionyl-tRNA(fMet) subsequently binds. Helps modulate mRNA selection, yielding the 30S pre-initiation complex (PIC). Upon addition of the 50S ribosomal subunit IF-1, IF-2 and IF-3 are released leaving the mature 70S translation initiation complex. This Psychromonas ingrahamii (strain DSM 17664 / CCUG 51855 / 37) protein is Translation initiation factor IF-1.